The following is a 561-amino-acid chain: MGVRSDTIKKGFERAPHRSLLRATGLTDADFDKPFIGIANSHVDIIPGHFFLQEYGRIAKDEIRKAGGVPFEFNTIGVDDGIAMGHAGMLYSLPSRELIADSIETMMNAHSLDALLCIPNCDKIVPGMLMGALRVDVPTVFCSGGPMKAGRMADGTAIDLTTAFEAVGKRALGQMSDAELYEIECKACPSGGSCSGMFTANSMNVLCEAMGVALPGNGTALALTPEREALLRRAARRAVEIAGDERFRLRRIVNADAIHNAMVVDMAMGGSSNTVLHMLAIAREAGVEFGLRQIEAVAAKVGHIAKIAPSLSTVHIEDVHRAGGVPAVLHEVARRGGVVREDALTVTGETVGERIRGAEIKDRSVIHPLEEAYSAVGGLAVLFGNLAPEGAVVKTAGIQPSMRKFTGRAICFDSQEEAIAGIMGGKVKPGHFVVIRYEGPRGGPGMQEMLAPTSLIMGMGLGEQVALATDGRFSGATRGACVGHVSPEAAEGGPLALVQDGDAVTIDVEARALTVDVPDAELARRREGFRPKRKEIRSSWLKRYALLVSNASAGAVMKTEL.

D80 lines the Mg(2+) pocket. [2Fe-2S] cluster is bound at residue C121. Residues D122 and K123 each contribute to the Mg(2+) site. An N6-carboxylysine modification is found at K123. C194 lines the [2Fe-2S] cluster pocket. Residue E448 coordinates Mg(2+). The Proton acceptor role is filled by S474.

Belongs to the IlvD/Edd family. In terms of assembly, homodimer. [2Fe-2S] cluster is required as a cofactor. Requires Mg(2+) as cofactor.

The catalysed reaction is (2R)-2,3-dihydroxy-3-methylbutanoate = 3-methyl-2-oxobutanoate + H2O. The enzyme catalyses (2R,3R)-2,3-dihydroxy-3-methylpentanoate = (S)-3-methyl-2-oxopentanoate + H2O. Its pathway is amino-acid biosynthesis; L-isoleucine biosynthesis; L-isoleucine from 2-oxobutanoate: step 3/4. It functions in the pathway amino-acid biosynthesis; L-valine biosynthesis; L-valine from pyruvate: step 3/4. In terms of biological role, functions in the biosynthesis of branched-chain amino acids. Catalyzes the dehydration of (2R,3R)-2,3-dihydroxy-3-methylpentanoate (2,3-dihydroxy-3-methylvalerate) into 2-oxo-3-methylpentanoate (2-oxo-3-methylvalerate) and of (2R)-2,3-dihydroxy-3-methylbutanoate (2,3-dihydroxyisovalerate) into 2-oxo-3-methylbutanoate (2-oxoisovalerate), the penultimate precursor to L-isoleucine and L-valine, respectively. This is Dihydroxy-acid dehydratase from Anaeromyxobacter sp. (strain Fw109-5).